Consider the following 115-residue polypeptide: Protein VCF2 (115 aa).

Positions 1 to 12 (MGGCPVRKRRRN) are enriched in basic residues. The segment at 1 to 70 (MGGCPVRKRR…GPEGNLNQIV (70 aa)) is disordered. The span at 33 to 44 (FQDSQDTEFSWS) shows a compositional bias: polar residues.

It belongs to the VCF family.

This Homo sapiens (Human) protein is Protein VCF2.